The primary structure comprises 229 residues: Uracil-DNA glycosylase (229 aa).

Residue Asp-65 is the Proton acceptor of the active site.

Belongs to the uracil-DNA glycosylase (UDG) superfamily. UNG family.

It is found in the cytoplasm. It catalyses the reaction Hydrolyzes single-stranded DNA or mismatched double-stranded DNA and polynucleotides, releasing free uracil.. Functionally, excises uracil residues from the DNA which can arise as a result of misincorporation of dUMP residues by DNA polymerase or due to deamination of cytosine. The chain is Uracil-DNA glycosylase from Latilactobacillus sakei subsp. sakei (strain 23K) (Lactobacillus sakei subsp. sakei).